A 145-amino-acid chain; its full sequence is Putative antiporter subunit mnhG2 (145 aa).

3 helical membrane-spanning segments follow: residues 11 to 31 (IAAV…IGIV), 51 to 71 (VLLT…FFSV), and 72 to 92 (RLLL…HLVA).

This sequence belongs to the CPA3 antiporters (TC 2.A.63) subunit G family. As to quaternary structure, may form a heterooligomeric complex that consists of seven subunits: mnhA2, mnhB2, mnhC2, mnhD2, mnhE2, mnhF2 and mnhG2.

Its subcellular location is the cell membrane. The chain is Putative antiporter subunit mnhG2 (mnhG2) from Staphylococcus aureus (strain bovine RF122 / ET3-1).